A 258-amino-acid chain; its full sequence is Indole-3-glycerol phosphate synthase (258 aa).

Belongs to the TrpC family.

The enzyme catalyses 1-(2-carboxyphenylamino)-1-deoxy-D-ribulose 5-phosphate + H(+) = (1S,2R)-1-C-(indol-3-yl)glycerol 3-phosphate + CO2 + H2O. It participates in amino-acid biosynthesis; L-tryptophan biosynthesis; L-tryptophan from chorismate: step 4/5. The polypeptide is Indole-3-glycerol phosphate synthase (Legionella pneumophila (strain Lens)).